The following is a 197-amino-acid chain: Protein GrpE (197 aa).

The interval 1–39 (MSSKEQKTPEGQAPEEIIMDQHEEIEAVEPEASAEQVDP) is disordered.

Belongs to the GrpE family. Homodimer.

The protein localises to the cytoplasm. Participates actively in the response to hyperosmotic and heat shock by preventing the aggregation of stress-denatured proteins, in association with DnaK and GrpE. It is the nucleotide exchange factor for DnaK and may function as a thermosensor. Unfolded proteins bind initially to DnaJ; upon interaction with the DnaJ-bound protein, DnaK hydrolyzes its bound ATP, resulting in the formation of a stable complex. GrpE releases ADP from DnaK; ATP binding to DnaK triggers the release of the substrate protein, thus completing the reaction cycle. Several rounds of ATP-dependent interactions between DnaJ, DnaK and GrpE are required for fully efficient folding. The chain is Protein GrpE from Escherichia coli O157:H7 (strain EC4115 / EHEC).